The following is a 415-amino-acid chain: MATH domain and coiled-coil domain-containing protein At2g42465 (415 aa).

The MATH domain maps to 6–130; that stretch reads RKALTLTVTN…NDRFNIEIYI (125 aa). Residues 244-341 adopt a coiled-coil conformation; sequence FKLEWLKAKL…LLKDTYSDLK (98 aa).

In Arabidopsis thaliana (Mouse-ear cress), this protein is MATH domain and coiled-coil domain-containing protein At2g42465.